A 287-amino-acid chain; its full sequence is MKTRPMKSDWIATARTLSEAVPFLRRYDDAIVVIKFGGHAMGDAEAMASFARDIVLMRQVGVNPVIVHGGGPMINAMLAKLDINSDFVNGKRVTDAATIEVVEMVLSGLVNKRIVQAINREGGRAIGLSGKDANLIVCDPADPALGFVGEPVEVTPDTLLQLVRSEIIPVIAPIGTGREGETFNINGDTAAGAIAAALKADRLLLLTDVSGVKDAQGKVVTELTVENIEEMTAAGVIAGGMIPKTETCVTAIRGGVRAAVILDGRAPNACLLELFTEHGAGSIIRRG.

Substrate is bound by residues 70–71, arginine 92, and asparagine 184; that span reads GG.

This sequence belongs to the acetylglutamate kinase family. ArgB subfamily.

It is found in the cytoplasm. The enzyme catalyses N-acetyl-L-glutamate + ATP = N-acetyl-L-glutamyl 5-phosphate + ADP. Its pathway is amino-acid biosynthesis; L-arginine biosynthesis; N(2)-acetyl-L-ornithine from L-glutamate: step 2/4. Functionally, catalyzes the ATP-dependent phosphorylation of N-acetyl-L-glutamate. The protein is Acetylglutamate kinase of Dinoroseobacter shibae (strain DSM 16493 / NCIMB 14021 / DFL 12).